A 434-amino-acid polypeptide reads, in one-letter code: Mitochondrial distribution and morphology protein 10 (434 aa).

The protein belongs to the MDM10 family. In terms of assembly, component of the ER-mitochondria encounter structure (ERMES) or MDM complex, composed of mmm1, mdm10, mdm12 and mdm34. Associates with the mitochondrial outer membrane sorting assembly machinery SAM(core) complex.

It is found in the mitochondrion outer membrane. Component of the ERMES/MDM complex, which serves as a molecular tether to connect the endoplasmic reticulum and mitochondria. Components of this complex are involved in the control of mitochondrial shape and protein biogenesis and may function in phospholipid exchange. mdm10 is involved in the late assembly steps of the general translocase of the mitochondrial outer membrane (TOM complex). Functions in the tom40-specific route of the assembly of outer membrane beta-barrel proteins, including the association of tom40 with the receptor tom22 and small TOM proteins. Can associate with the SAM(core) complex as well as the mdm12-mmm1 complex, both involved in late steps of the major beta-barrel assembly pathway, that is responsible for biogenesis of all outer membrane beta-barrel proteins. May act as a switch that shuttles between both complexes and channels precursor proteins into the tom40-specific pathway. Plays a role in mitochondrial morphology and in the inheritance of mitochondria. This is Mitochondrial distribution and morphology protein 10 (mdmB) from Aspergillus niger (strain ATCC MYA-4892 / CBS 513.88 / FGSC A1513).